We begin with the raw amino-acid sequence, 139 residues long: Large ribosomal subunit protein uL16 (139 aa).

Belongs to the universal ribosomal protein uL16 family. In terms of assembly, part of the 50S ribosomal subunit.

Functionally, binds 23S rRNA and is also seen to make contacts with the A and possibly P site tRNAs. This chain is Large ribosomal subunit protein uL16, found in Chlorobium luteolum (strain DSM 273 / BCRC 81028 / 2530) (Pelodictyon luteolum).